Consider the following 101-residue polypeptide: Small ribosomal subunit protein uS14 (101 aa).

Residues 51–72 (LPRDSSPSRQRNPCRQTGRPHG) form a disordered region. Polar residues predominate over residues 52-65 (PRDSSPSRQRNPCR).

It belongs to the universal ribosomal protein uS14 family. Part of the 30S ribosomal subunit. Contacts proteins S3 and S10.

Its function is as follows. Binds 16S rRNA, required for the assembly of 30S particles and may also be responsible for determining the conformation of the 16S rRNA at the A site. This is Small ribosomal subunit protein uS14 from Buchnera aphidicola subsp. Acyrthosiphon kondoi (Acyrthosiphon kondoi symbiotic bacterium).